The sequence spans 520 residues: MSIEIQWIGIGAAFLVGAIGGALVRRKVAATQLAEAKRMADQILSEATKEADILRKEAEIQKKDALLEAKTAWEQEAREMRRELQAQEKRLVQREENLDRKVAQVDARDEEFGQREKRLSQQESRIRSWEKEADALVRQQRERLEELAGLGAEEAKAQLMEQMESEARHECAKKIKQIEDEAKEAADKKAQEILALAVQRYAGDFVAESAVSVVPLPNDEMKGRIIGREGRNIRAIEAATGIDLIIDDTPEAVIISGFNPVRREVARLALERLIGDGRIHPSRIEEAVNKATQDVDNAIREAGEQATFDVGVHGIHPEIIKLIGRLRYRTSYGQNVLQHSIEVAFLCGIMAAELGINVKQAKRAGLLHDIGKAVDHEVEGSHAVIGANLARKYGESAKIVHALAAHHEDEKPSTVLAVLVQAADALSGARPGARREMLETYVKRLQDLERIGTSFAGVTNCYAIQAGREIRVMVSSEEVSDVQSHTLAKQIARQIEEEMAYPGQIKINVIRETRAVEFAK.

Residues 3–23 (IEIQWIGIGAAFLVGAIGGAL) traverse the membrane as a helical segment. In terms of domain architecture, KH spans 210 to 273 (AVSVVPLPND…EVARLALERL (64 aa)). The region spanning 336-429 (VLQHSIEVAF…VQAADALSGA (94 aa)) is the HD domain.

This sequence belongs to the RNase Y family.

Its subcellular location is the cell membrane. Functionally, endoribonuclease that initiates mRNA decay. This is Ribonuclease Y from Syntrophotalea carbinolica (strain DSM 2380 / NBRC 103641 / GraBd1) (Pelobacter carbinolicus).